We begin with the raw amino-acid sequence, 250 residues long: Aquaporin (250 aa).

Residues 1-15 lie on the Cytoplasmic side of the membrane; the sequence is MTRETLKTLQSTFGE. The helical transmembrane segment at 16–36 threads the bilayer; that stretch reads MVASFVFGFAVYSALLGSALT. The Extracellular portion of the chain corresponds to 37-42; it reads EQSAAR. A helical transmembrane segment spans residues 43–63; that stretch reads VIVGLTVGFSGICVIYSFCDV. Topologically, residues 64-86 are cytoplasmic; the sequence is TVAHFNPAITLAAILTCKLGVLR. The NPA signature appears at 69–71; the sequence is NPA. The helical transmembrane segment at 87-107 threads the bilayer; the sequence is GIGYIVAQYIGFILAVCALLP. The Extracellular segment spans residues 108–133; that stretch reads CSPVGYKETLNIIRPTPSPFGGDNLN. Residues 134 to 154 traverse the membrane as a helical segment; that stretch reads VFFTEFFLTAILVHVAFATAV. Over 155-179 the chain is Cytoplasmic; the sequence is NPYKPKTDTEGKFVDPDEEEPVDRR. The helical transmembrane segment at 180–200 threads the bilayer; sequence ITAPLCIGLTLGFLAFLGLAS. Residues 201-224 lie on the Extracellular side of the membrane; that stretch reads SGGAFNPGLTLAPVIMSNTWNHFW. The short motif at 206-208 is the NPG element; the sequence is NPG. A helical transmembrane segment spans residues 225 to 245; the sequence is AYFAGQYLGGFVGGLLQVLVL. Topologically, residues 246-250 are cytoplasmic; that stretch reads YKLSF.

The protein belongs to the MIP/aquaporin (TC 1.A.8) family.

The protein localises to the cell membrane. Water channel required to facilitate the transport of water across membranes. Involved in osmotolerance. This is Aquaporin (AQP) from Encephalitozoon cuniculi (strain GB-M1) (Microsporidian parasite).